Here is a 328-residue protein sequence, read N- to C-terminus: Tetraacyldisaccharide 4'-kinase (328 aa).

55 to 62 lines the ATP pocket; it reads TAGGNGKT.

Belongs to the LpxK family.

The catalysed reaction is a lipid A disaccharide + ATP = a lipid IVA + ADP + H(+). It functions in the pathway glycolipid biosynthesis; lipid IV(A) biosynthesis; lipid IV(A) from (3R)-3-hydroxytetradecanoyl-[acyl-carrier-protein] and UDP-N-acetyl-alpha-D-glucosamine: step 6/6. Its function is as follows. Transfers the gamma-phosphate of ATP to the 4'-position of a tetraacyldisaccharide 1-phosphate intermediate (termed DS-1-P) to form tetraacyldisaccharide 1,4'-bis-phosphate (lipid IVA). This is Tetraacyldisaccharide 4'-kinase from Escherichia coli O81 (strain ED1a).